We begin with the raw amino-acid sequence, 245 residues long: 1-(5-phosphoribosyl)-5-[(5-phosphoribosylamino)methylideneamino] imidazole-4-carboxamide isomerase (245 aa).

The active-site Proton acceptor is aspartate 8. Aspartate 130 acts as the Proton donor in catalysis.

This sequence belongs to the HisA/HisF family.

Its subcellular location is the cytoplasm. The catalysed reaction is 1-(5-phospho-beta-D-ribosyl)-5-[(5-phospho-beta-D-ribosylamino)methylideneamino]imidazole-4-carboxamide = 5-[(5-phospho-1-deoxy-D-ribulos-1-ylimino)methylamino]-1-(5-phospho-beta-D-ribosyl)imidazole-4-carboxamide. The protein operates within amino-acid biosynthesis; L-histidine biosynthesis; L-histidine from 5-phospho-alpha-D-ribose 1-diphosphate: step 4/9. This Marinobacter nauticus (strain ATCC 700491 / DSM 11845 / VT8) (Marinobacter aquaeolei) protein is 1-(5-phosphoribosyl)-5-[(5-phosphoribosylamino)methylideneamino] imidazole-4-carboxamide isomerase.